Reading from the N-terminus, the 232-residue chain is Phosphatidylserine decarboxylase proenzyme (232 aa).

Residue S190 is the Schiff-base intermediate with substrate; via pyruvic acid of the active site. S190 carries the post-translational modification Pyruvic acid (Ser); by autocatalysis.

This sequence belongs to the phosphatidylserine decarboxylase family. PSD-A subfamily. Heterodimer of a large membrane-associated beta subunit and a small pyruvoyl-containing alpha subunit. Pyruvate is required as a cofactor. Post-translationally, is synthesized initially as an inactive proenzyme. Formation of the active enzyme involves a self-maturation process in which the active site pyruvoyl group is generated from an internal serine residue via an autocatalytic post-translational modification. Two non-identical subunits are generated from the proenzyme in this reaction, and the pyruvate is formed at the N-terminus of the alpha chain, which is derived from the carboxyl end of the proenzyme. The post-translation cleavage follows an unusual pathway, termed non-hydrolytic serinolysis, in which the side chain hydroxyl group of the serine supplies its oxygen atom to form the C-terminus of the beta chain, while the remainder of the serine residue undergoes an oxidative deamination to produce ammonia and the pyruvoyl prosthetic group on the alpha chain.

It is found in the cell membrane. It carries out the reaction a 1,2-diacyl-sn-glycero-3-phospho-L-serine + H(+) = a 1,2-diacyl-sn-glycero-3-phosphoethanolamine + CO2. It participates in phospholipid metabolism; phosphatidylethanolamine biosynthesis; phosphatidylethanolamine from CDP-diacylglycerol: step 2/2. Functionally, catalyzes the formation of phosphatidylethanolamine (PtdEtn) from phosphatidylserine (PtdSer). In Bartonella henselae (strain ATCC 49882 / DSM 28221 / CCUG 30454 / Houston 1) (Rochalimaea henselae), this protein is Phosphatidylserine decarboxylase proenzyme.